Reading from the N-terminus, the 374-residue chain is Proton-coupled zinc antiporter SLC30A8 (374 aa).

Residues 1–67 (MKGSEEAYLV…QREQTFAKKK (67 aa)) lie on the Cytoplasmic side of the membrane. The disordered stretch occupies residues 18–48 (YSLTKDSEKNHPSKPPLQDEENPQSKYHCHN). Residues H45, C46, and H47 each contribute to the Zn(2+) site. The short motif at 45 to 47 (HCH) is the HCH Motif; seals regulatory zinc-binding pocket element. The helical transmembrane segment at 68 to 88 (LCIASLICFVFISAEIVGGYI) threads the bilayer. Residues 89–91 (AGS) are Lumenal, vesicle-facing. Residues 92 to 112 (LAVVTDAAHLLVDLSSFFISL) form a helical membrane-spanning segment. Residues H100, D104, and H131 each coordinate Zn(2+). The Cytoplasmic portion of the chain corresponds to 113–134 (CSLWLSSKSSTTRLTFGWHRAE). Residues 135–155 (ILGALMSVITIWLVTGVLVYL) traverse the membrane as a helical segment. Over 156–169 (ACERLIRPDYTIDG) the chain is Lumenal, vesicle. Residues 170-190 (TVMLITSACALGANLVLALIL) traverse the membrane as a helical segment. The Cytoplasmic portion of the chain corresponds to 191-222 (HQSGHGHSHAGGKHEHMASEYKPQTNASIRAA). The helical transmembrane segment at 223 to 243 (FIHVIGDLFQSISVLISALII) threads the bilayer. Zn(2+)-binding residues include H225 and D229. Residues 244–251 (YFKPEYKM) are Lumenal, vesicle-facing. The helical transmembrane segment at 252 to 272 (ADPICTFIFSIFVLITTVTVL) threads the bilayer. Residues 273–374 (RDLLTVLMEG…ECMFCYEPTQ (102 aa)) lie on the Cytoplasmic side of the membrane. 6 residues coordinate Zn(2+): H306, H323, H350, E357, C366, and C369.

It belongs to the cation diffusion facilitator (CDF) transporter (TC 2.A.4) family. SLC30A subfamily. Homodimer.

It localises to the cytoplasmic vesicle. Its subcellular location is the secretory vesicle membrane. It is found in the cell membrane. The catalysed reaction is Zn(2+)(in) + 2 H(+)(out) = Zn(2+)(out) + 2 H(+)(in). Its function is as follows. Proton-coupled zinc ion antiporter mediating the entry of zinc into the lumen of pancreatic beta cell secretory granules, thereby regulating insulin secretion. This chain is Proton-coupled zinc antiporter SLC30A8 (slc30a8), found in Xenopus tropicalis (Western clawed frog).